The primary structure comprises 116 residues: Large ribosomal subunit protein bL17 (116 aa).

Belongs to the bacterial ribosomal protein bL17 family. As to quaternary structure, part of the 50S ribosomal subunit. Contacts protein L32.

This is Large ribosomal subunit protein bL17 from Gloeobacter violaceus (strain ATCC 29082 / PCC 7421).